The primary structure comprises 424 residues: Adenosylmethionine-8-amino-7-oxononanoate aminotransferase (424 aa).

Trp-46 is a substrate binding site. 106-107 is a binding site for pyridoxal 5'-phosphate; the sequence is GS. Substrate is bound at residue Tyr-138. Asp-240 is a binding site for pyridoxal 5'-phosphate. Lys-269 and Gly-303 together coordinate substrate. Position 269 is an N6-(pyridoxal phosphate)lysine (Lys-269). Pyridoxal 5'-phosphate is bound at residue 304 to 305; that stretch reads HS. Arg-391 is a binding site for substrate.

Belongs to the class-III pyridoxal-phosphate-dependent aminotransferase family. BioA subfamily. In terms of assembly, homodimer. It depends on pyridoxal 5'-phosphate as a cofactor.

The protein resides in the cytoplasm. The catalysed reaction is (8S)-8-amino-7-oxononanoate + S-adenosyl-L-methionine = S-adenosyl-4-methylsulfanyl-2-oxobutanoate + (7R,8S)-7,8-diammoniononanoate. The protein operates within cofactor biosynthesis; biotin biosynthesis; 7,8-diaminononanoate from 8-amino-7-oxononanoate (SAM route): step 1/1. Functionally, catalyzes the transfer of the alpha-amino group from S-adenosyl-L-methionine (SAM) to 7-keto-8-aminopelargonic acid (KAPA) to form 7,8-diaminopelargonic acid (DAPA). It is the only aminotransferase known to utilize SAM as an amino donor. Complements a bioU deletion in Synechocystis PCC 6803. This Synechococcus elongatus (strain ATCC 33912 / PCC 7942 / FACHB-805) (Anacystis nidulans R2) protein is Adenosylmethionine-8-amino-7-oxononanoate aminotransferase.